Reading from the N-terminus, the 80-residue chain is Large ribosomal subunit protein bL31B (80 aa).

Belongs to the bacterial ribosomal protein bL31 family. Type B subfamily. As to quaternary structure, part of the 50S ribosomal subunit.

In Stenotrophomonas maltophilia (strain K279a), this protein is Large ribosomal subunit protein bL31B.